Here is a 273-residue protein sequence, read N- to C-terminus: MSLTLAIYGKGGIGKSTTSSNLSAALALKGAKVLQIGCDPKHDSTFALTGMLQPTVIDVLTEVDFHHEEVSVEDVVHTGFAGVDTLESGGPPAGSGCGGYVVGETVKLLHEFGLYDKYDVIVFDVLGDVVCGGFSAPLNYADYGVIIACNDFDSIFAANRLCLAIKQKSARYRVELAGIIANRVDYELGGGTTLLEQFAETVGTQIIGRVPYHDLIRRSRLMGKTLFEMEGPGKEECTTPFLEMAEYLLNRPRSTVPKPMGDREIFNVIGGWR.

ATP contacts are provided by residues 12–17 (GIGKST) and K41. S16 contacts Mg(2+). The [4Fe-4S] cluster site is built by C97 and C131. Residue 182-183 (NR) participates in ATP binding.

This sequence belongs to the NifH/BchL/ChlL family. Homodimer. Protochlorophyllide reductase is composed of three subunits; BchL, BchN and BchB. Requires [4Fe-4S] cluster as cofactor.

It catalyses the reaction chlorophyllide a + oxidized 2[4Fe-4S]-[ferredoxin] + 2 ADP + 2 phosphate = protochlorophyllide a + reduced 2[4Fe-4S]-[ferredoxin] + 2 ATP + 2 H2O. The protein operates within porphyrin-containing compound metabolism; bacteriochlorophyll biosynthesis (light-independent). In terms of biological role, component of the dark-operative protochlorophyllide reductase (DPOR) that uses Mg-ATP and reduced ferredoxin to reduce ring D of protochlorophyllide (Pchlide) to form chlorophyllide a (Chlide). This reaction is light-independent. The L component serves as a unique electron donor to the NB-component of the complex, and binds Mg-ATP. This is Light-independent protochlorophyllide reductase iron-sulfur ATP-binding protein from Roseiflexus castenholzii (strain DSM 13941 / HLO8).